The sequence spans 217 residues: Flagellin B1 (217 aa).

A propeptide spanning residues 1–12 is cleaved from the precursor; it reads MKVFEFLKGKRG.

The protein belongs to the archaeal flagellin family.

The protein localises to the archaeal flagellum. In terms of biological role, flagellin is the subunit protein which polymerizes to form the filaments of archaeal flagella. The protein is Flagellin B1 (flaB1) of Methanocaldococcus jannaschii (strain ATCC 43067 / DSM 2661 / JAL-1 / JCM 10045 / NBRC 100440) (Methanococcus jannaschii).